The following is a 437-amino-acid chain: Proline--tRNA ligase (437 aa).

Belongs to the class-II aminoacyl-tRNA synthetase family. ProS type 2 subfamily. Homodimer.

It localises to the cytoplasm. It carries out the reaction tRNA(Pro) + L-proline + ATP = L-prolyl-tRNA(Pro) + AMP + diphosphate. Its function is as follows. Catalyzes the attachment of proline to tRNA(Pro) in a two-step reaction: proline is first activated by ATP to form Pro-AMP and then transferred to the acceptor end of tRNA(Pro). This chain is Proline--tRNA ligase, found in Rhizorhabdus wittichii (strain DSM 6014 / CCUG 31198 / JCM 15750 / NBRC 105917 / EY 4224 / RW1) (Sphingomonas wittichii).